We begin with the raw amino-acid sequence, 446 residues long: Inhibitor of Apoptosis OPG037 (446 aa).

ANK repeat units follow at residues 71–100 (DGNYPLHIASKINNNRIVAMLLTHGADPNA), 104–135 (QHKTPLYYLSGTDDEVIERINLLVQYGAKINN), 207–237 (DGNTPLHIVCSKTVKNVDIINLLLPSTDVNK), 241–271 (FGDSPLTLLIKTLSPAHLINKLLSTSNVITD), 296–325 (YDSTDFKMAVEVGSIRCIKYLLDNDIICED), and 327–351 (MYYAVLSEYETMVDYLLFNHFSVDS).

The protein belongs to the orthopoxvirus OPG037 protein family. May interact with host caspase-9-Apaf-1 complex.

The protein resides in the host cytoplasm. In terms of biological role, inhibits host apoptosis. Acts by associating with host apoptosome. The chain is Inhibitor of Apoptosis OPG037 (OPG037) from Variola virus (isolate Human/India/Ind3/1967) (VARV).